A 278-amino-acid polypeptide reads, in one-letter code: HTH-type transcriptional regulator TsaQ1/TsaQ2 (278 aa).

One can recognise an HTH iclR-type domain in the interval 19–80; it reads VHSLAKGLEI…PRSRKLAMGA (62 aa). Positions 40–59 form a DNA-binding region, H-T-H motif; the sequence is NQQLVELTGLPKATVSRLTS. The region spanning 95 to 266 is the IclR-ED domain; that stretch reads LQRIARPHME…VQDIQAEMRA (172 aa).

Its function is as follows. Both copies function as additional regulators for the tsa locus, specifically for tsaT. The protein is HTH-type transcriptional regulator TsaQ1/TsaQ2 (tsaQ1) of Comamonas testosteroni (Pseudomonas testosteroni).